The primary structure comprises 317 residues: tRNA dimethylallyltransferase (317 aa).

19 to 26 (GPTASGKS) is an ATP binding site. Position 21 to 26 (21 to 26 (TASGKS)) interacts with substrate. The tract at residues 44 to 47 (DSMQ) is interaction with substrate tRNA.

The protein belongs to the IPP transferase family. As to quaternary structure, monomer. Mg(2+) serves as cofactor.

The catalysed reaction is adenosine(37) in tRNA + dimethylallyl diphosphate = N(6)-dimethylallyladenosine(37) in tRNA + diphosphate. Its function is as follows. Catalyzes the transfer of a dimethylallyl group onto the adenine at position 37 in tRNAs that read codons beginning with uridine, leading to the formation of N6-(dimethylallyl)adenosine (i(6)A). The chain is tRNA dimethylallyltransferase from Methylorubrum extorquens (strain CM4 / NCIMB 13688) (Methylobacterium extorquens).